Here is a 150-residue protein sequence, read N- to C-terminus: Putative pre-16S rRNA nuclease (150 aa).

The protein belongs to the YqgF nuclease family.

It is found in the cytoplasm. Its function is as follows. Could be a nuclease involved in processing of the 5'-end of pre-16S rRNA. This chain is Putative pre-16S rRNA nuclease, found in Chlamydia abortus (strain DSM 27085 / S26/3) (Chlamydophila abortus).